The sequence spans 74 residues: RNA-binding protein Hfq (74 aa).

A Sm domain is found at 9-69 (DQFLNQLRKD…ISTFAPEKNV (61 aa)).

This sequence belongs to the Hfq family. Homohexamer.

In terms of biological role, RNA chaperone that binds small regulatory RNA (sRNAs) and mRNAs to facilitate mRNA translational regulation in response to envelope stress, environmental stress and changes in metabolite concentrations. Also binds with high specificity to tRNAs. The polypeptide is RNA-binding protein Hfq (Geobacillus sp. (strain WCH70)).